A 365-amino-acid polypeptide reads, in one-letter code: MNKVRHFIDTQDLSKKEIFEIFRLMKMLKEARYCGAVPELLKNKTLAMIFEEPSTRTRVSFEAAMTLLGGHAQYLKPGELHLGVRESLYDTTKVLSHMCDGIMCRALKNETVLNLAKYADVPVLNGLTDYNHPTQAICDVFTMLEYMPATKNLEYEDIKFEDIKVVFIGDRTNVCSSTMHITTKLGMNFVHISPKRYQSPQEWIDIANENIKQANSGSVLVTDDLEQVRGADIVYTDLWWWVDQEDEAEERVKAFKPTYQVTPELMEKAGKQALFMHCLPASRNVEVYDEVIDSDQSIAFEQAENRLTAQMGLLVYYLYPQIDKSSNAVKDYYRGKVEAFMEHQDRSWKQRYTYNNDYAETKNKK.

Residues 54–58, Arg-105, and His-132 each bind carbamoyl phosphate; that span reads STRTR. Position 277–280 (277–280) interacts with putrescine; sequence HCLP.

This sequence belongs to the aspartate/ornithine carbamoyltransferase superfamily. PTCase family. Homotrimer.

It localises to the cytoplasm. The enzyme catalyses carbamoyl phosphate + putrescine = N-carbamoylputrescine + phosphate + H(+). Its pathway is amine and polyamine biosynthesis; putrescine biosynthesis via agmatine pathway; putrescine from N-carbamoylputrescine (transferase route): step 1/1. Catalyzes the phosphorolysis of N-carbamoylputrescine to form carbamoyl phosphate and putrescine. Is involved in the degradation pathway of the polyamine agmatine. The protein is Putrescine carbamoyltransferase of Mycoplasma mycoides subsp. mycoides SC (strain CCUG 32753 / NCTC 10114 / PG1).